Here is a 414-residue protein sequence, read N- to C-terminus: DNA primase small subunit PriS (414 aa).

Residues Asp98, Asp100, and Asp312 contribute to the active site.

This sequence belongs to the eukaryotic-type primase small subunit family. In terms of assembly, heterodimer of a small subunit (PriS) and a large subunit (PriL). Mg(2+) serves as cofactor. It depends on Mn(2+) as a cofactor.

Functionally, catalytic subunit of DNA primase, an RNA polymerase that catalyzes the synthesis of short RNA molecules used as primers for DNA polymerase during DNA replication. The small subunit contains the primase catalytic core and has DNA synthesis activity on its own. Binding to the large subunit stabilizes and modulates the activity, increasing the rate of DNA synthesis while decreasing the length of the DNA fragments, and conferring RNA synthesis capability. The DNA polymerase activity may enable DNA primase to also catalyze primer extension after primer synthesis. May also play a role in DNA repair. The chain is DNA primase small subunit PriS from Methanosarcina acetivorans (strain ATCC 35395 / DSM 2834 / JCM 12185 / C2A).